Here is a 207-residue protein sequence, read N- to C-terminus: Putative zinc finger protein 137 (207 aa).

Residues 72–94 form a C2H2-type 1 zinc finger; sequence CKCNDCHKVFSNATTIANHWRIH. Residues 100–122 form a C2H2-type 2; degenerate zinc finger; it reads YKCNKCGKIFRHRSYLAVYQRTH. The C2H2-type 3; degenerate zinc-finger motif lies at 128-150; it reads YKYHDCGKVFSQASSYAKHRRIH. C2H2-type zinc fingers lie at residues 156–178 and 184–206; these read HKCD…QRIH and YKCL…QKIH.

This sequence belongs to the krueppel C2H2-type zinc-finger protein family.

It is found in the nucleus. Functionally, may be involved in transcriptional regulation. The protein is Putative zinc finger protein 137 (ZNF137P) of Homo sapiens (Human).